We begin with the raw amino-acid sequence, 211 residues long: Uracil phosphoribosyltransferase (211 aa).

5-phospho-alpha-D-ribose 1-diphosphate is bound by residues arginine 78, arginine 103, and 130 to 138 (DPMLATGSS). Uracil-binding positions include isoleucine 193 and 198 to 200 (GDA). Residue aspartate 199 participates in 5-phospho-alpha-D-ribose 1-diphosphate binding.

This sequence belongs to the UPRTase family. Mg(2+) serves as cofactor.

It catalyses the reaction UMP + diphosphate = 5-phospho-alpha-D-ribose 1-diphosphate + uracil. Its pathway is pyrimidine metabolism; UMP biosynthesis via salvage pathway; UMP from uracil: step 1/1. With respect to regulation, allosterically activated by GTP. Functionally, catalyzes the conversion of uracil and 5-phospho-alpha-D-ribose 1-diphosphate (PRPP) to UMP and diphosphate. This chain is Uracil phosphoribosyltransferase, found in Acinetobacter baylyi (strain ATCC 33305 / BD413 / ADP1).